Here is a 365-residue protein sequence, read N- to C-terminus: MSCPVPNPGILDIAPYTPGKSPVPEPGRKVFKLSANETPFGPSPKAIEAFKKVADHLEDYPEGTSRVLREAIGRTFGLDPNRIICGAGSDEILNLLAHTYLGQGDEAISTTHGFLVYPIATMAVGARNVIAQEKNLTCDVDAILKAVTPKTKLVWLANPNNPTGTYIPFDEVKRLRAGLPSHVLLVLDAAYCDYVSRNDYEMGIELVATTENTVVTHTFSKIHGLAALRIGWMFGPEHIIDAVNRIRGPFNVSTPAMYAAVAAIEDTAHQAMSKQFTETWRNWLTEEIGKLGLKVTPSVANFVLIHFPTDRGRTSDDADAFLTKRGLVLRALKNYGLPHSLRMTIGTEEANRLVVDGLRDFMAGK.

Lys221 is modified (N6-(pyridoxal phosphate)lysine).

It belongs to the class-II pyridoxal-phosphate-dependent aminotransferase family. Histidinol-phosphate aminotransferase subfamily. As to quaternary structure, homodimer. Requires pyridoxal 5'-phosphate as cofactor.

The catalysed reaction is L-histidinol phosphate + 2-oxoglutarate = 3-(imidazol-4-yl)-2-oxopropyl phosphate + L-glutamate. Its pathway is amino-acid biosynthesis; L-histidine biosynthesis; L-histidine from 5-phospho-alpha-D-ribose 1-diphosphate: step 7/9. In Bradyrhizobium diazoefficiens (strain JCM 10833 / BCRC 13528 / IAM 13628 / NBRC 14792 / USDA 110), this protein is Histidinol-phosphate aminotransferase 2 (hisC2).